Reading from the N-terminus, the 245-residue chain is MYRYKITIEYLGTDLAGWQRQAGVMSVQQILEEAIYKFSGEQVILFGAGRTDAGVHAVGQVAHFDLSKYLEPHKIITAINYFVRPYAVGVWNCELAPNNFHARFSATSRYYIYRIINRPYPSVIDLNRAWWISSPLDVPAMQQAAAYLLGKHDFTSFRASSCQSKSPIKTLTELNIIKEDEEIKLYLSAPSFLHHMVRNIVGSLVLVGKNIWQAEQIKDVLEAKDRKAAGPTAPASGLYFVKAAY.

The active-site Nucleophile is the Asp52. Tyr111 contributes to the substrate binding site.

Belongs to the tRNA pseudouridine synthase TruA family. In terms of assembly, homodimer.

It catalyses the reaction uridine(38/39/40) in tRNA = pseudouridine(38/39/40) in tRNA. Its function is as follows. Formation of pseudouridine at positions 38, 39 and 40 in the anticodon stem and loop of transfer RNAs. This is tRNA pseudouridine synthase A from Rickettsia rickettsii (strain Iowa).